The primary structure comprises 92 residues: Major allergen I polypeptide chain 1 (92 aa).

A signal peptide spans M1–C22.

This sequence belongs to the secretoglobin family. As to quaternary structure, heterotetramer composed of two non-covalently linked disulfide-linked heterodimer of chains 1 and 2. Saliva and sebaceous glands.

It is found in the secreted. This Felis catus (Cat) protein is Major allergen I polypeptide chain 1 (CH1).